The sequence spans 267 residues: MVALSNALSRVFGSLAGYKFPSFIQKGINALYVKIFKIDLSEFEPLENYRSLNALFTRSLKKERPFDKSPNICIAPCDALITECAFLDNDSALQIKGMPYKAHELVGEINPLSPSFFYANFYLSPKDYHHYHAPCDLEILEARYFAGKLLPVNKPSLHKNNNLFVGNERVTLVAKDIQGNRLYFVAVGALNVGKMRFNFDKNIQTNAKARFTQTYSYNPPIKVKKGDNLGNFEMGSTIVLFIQNTAFKDLKEKNVKFGESIGEFHAN.

Residues Asp78, His132, and Ser236 each act as charge relay system; for autoendoproteolytic cleavage activity in the active site. The active-site Schiff-base intermediate with substrate; via pyruvic acid; for decarboxylase activity is the Ser236. Position 236 is a pyruvic acid (Ser); by autocatalysis (Ser236).

The protein belongs to the phosphatidylserine decarboxylase family. PSD-B subfamily. Prokaryotic type I sub-subfamily. As to quaternary structure, heterodimer of a large membrane-associated beta subunit and a small pyruvoyl-containing alpha subunit. Pyruvate serves as cofactor. Is synthesized initially as an inactive proenzyme. Formation of the active enzyme involves a self-maturation process in which the active site pyruvoyl group is generated from an internal serine residue via an autocatalytic post-translational modification. Two non-identical subunits are generated from the proenzyme in this reaction, and the pyruvate is formed at the N-terminus of the alpha chain, which is derived from the carboxyl end of the proenzyme. The autoendoproteolytic cleavage occurs by a canonical serine protease mechanism, in which the side chain hydroxyl group of the serine supplies its oxygen atom to form the C-terminus of the beta chain, while the remainder of the serine residue undergoes an oxidative deamination to produce ammonia and the pyruvoyl prosthetic group on the alpha chain. During this reaction, the Ser that is part of the protease active site of the proenzyme becomes the pyruvoyl prosthetic group, which constitutes an essential element of the active site of the mature decarboxylase.

The protein localises to the cell membrane. The enzyme catalyses a 1,2-diacyl-sn-glycero-3-phospho-L-serine + H(+) = a 1,2-diacyl-sn-glycero-3-phosphoethanolamine + CO2. Its pathway is phospholipid metabolism; phosphatidylethanolamine biosynthesis; phosphatidylethanolamine from CDP-diacylglycerol: step 2/2. Functionally, catalyzes the formation of phosphatidylethanolamine (PtdEtn) from phosphatidylserine (PtdSer). The protein is Phosphatidylserine decarboxylase proenzyme of Helicobacter pylori (strain ATCC 700392 / 26695) (Campylobacter pylori).